Consider the following 342-residue polypeptide: Galactose mutarotase (342 aa).

Alanine 2 bears the N-acetylalanine mark. The residue at position 14 (serine 14) is a Phosphoserine. Beta-D-galactose contacts are provided by residues asparagine 81–arginine 82 and histidine 107. Serine 124 is modified (phosphoserine). The Proton donor role is filled by histidine 176. Residues histidine 176–tyrosine 178, aspartate 243, glutamine 279, and glutamate 307 each bind beta-D-galactose. Residue glutamate 307 is the Proton acceptor of the active site.

Belongs to the aldose epimerase family. As to quaternary structure, monomer.

Its subcellular location is the cytoplasm. It carries out the reaction alpha-D-galactose = beta-D-galactose. The catalysed reaction is alpha-D-glucose = beta-D-glucose. Its pathway is carbohydrate metabolism; hexose metabolism. It functions in the pathway carbohydrate metabolism; galactose metabolism. In terms of biological role, mutarotase that catalyzes the interconversion of beta-D-galactose and alpha-D-galactose during galactose metabolism. Beta-D-galactose is metabolized in the liver into glucose 1-phosphate, the primary metabolic fuel, by the action of four enzymes that constitute the Leloir pathway: GALM, GALK1 (galactokinase), GALT (galactose-1-phosphate uridylyltransferase) and GALE (UDP-galactose-4'-epimerase). Involved in the maintenance of the equilibrium between the beta- and alpha-anomers of galactose, therefore ensuring a sufficient supply of the alpha-anomer for GALK1. Also active on D-glucose although shows a preference for galactose over glucose. The polypeptide is Galactose mutarotase (GALM) (Pongo abelii (Sumatran orangutan)).